The sequence spans 246 residues: 1-(5-phosphoribosyl)-5-[(5-phosphoribosylamino)methylideneamino] imidazole-4-carboxamide isomerase (246 aa).

Asp-10 functions as the Proton acceptor in the catalytic mechanism. Residue Asp-135 is the Proton donor of the active site.

The protein belongs to the HisA/HisF family.

Its subcellular location is the cytoplasm. It carries out the reaction 1-(5-phospho-beta-D-ribosyl)-5-[(5-phospho-beta-D-ribosylamino)methylideneamino]imidazole-4-carboxamide = 5-[(5-phospho-1-deoxy-D-ribulos-1-ylimino)methylamino]-1-(5-phospho-beta-D-ribosyl)imidazole-4-carboxamide. It participates in amino-acid biosynthesis; L-histidine biosynthesis; L-histidine from 5-phospho-alpha-D-ribose 1-diphosphate: step 4/9. In Methanosarcina mazei (strain ATCC BAA-159 / DSM 3647 / Goe1 / Go1 / JCM 11833 / OCM 88) (Methanosarcina frisia), this protein is 1-(5-phosphoribosyl)-5-[(5-phosphoribosylamino)methylideneamino] imidazole-4-carboxamide isomerase.